The primary structure comprises 202 residues: Small ribosomal subunit protein uS4c (202 aa).

In terms of domain architecture, S4 RNA-binding spans 90–158 (MRLDNIIFRL…ITKNIELSQK (69 aa)).

The protein belongs to the universal ribosomal protein uS4 family. As to quaternary structure, part of the 30S ribosomal subunit. Contacts protein S5. The interaction surface between S4 and S5 is involved in control of translational fidelity.

It is found in the plastid. The protein localises to the chloroplast. Its function is as follows. One of the primary rRNA binding proteins, it binds directly to 16S rRNA where it nucleates assembly of the body of the 30S subunit. With S5 and S12 plays an important role in translational accuracy. This is Small ribosomal subunit protein uS4c (rps4) from Marchantia romanica (Liverwort).